The chain runs to 4963 residues: Kettin homolog (4963 aa).

Ig-like domains lie at 18–105 (PTFI…TCIL), 133–220 (PSAP…EAIS), and 303–392 (PIIR…ARIE). Disordered regions lie at residues 396-420 (LSVP…QQQQ), 466-501 (RRQL…EEER), 557-578 (IRPH…RQEV), 598-622 (QLYQ…QQRF), and 652-696 (TNGG…GHEH). 3 stretches are compositionally biased toward basic and acidic residues: residues 399–417 (PDER…RDRQ), 466–475 (RRQLEHEKRL), and 484–501 (FERE…EEER). Positions 401 to 517 (ERRKENQLRE…KHLRQQQQTQ (117 aa)) form a coiled coil. Over residues 557–576 (IRPHQQQQQHYQQQQQSPRQ) the composition is skewed to low complexity. The segment covering 658-685 (AANGSAKTANGSANGSANGSAVHAANGG) has biased composition (low complexity). 20 consecutive Ig-like domains span residues 706-796 (PQFL…FSLN), 806-893 (PEFT…GRVV), 937-1027 (PKFE…ANIA), 1065-1155 (PNFH…ATII), 1199-1281 (FHCE…AELT), 1462-1554 (PKFL…ITVT), 1594-1687 (PPTF…ATIR), 1728-1819 (PAFV…VDIN), 1992-2085 (PPVF…IFLE), 2126-2217 (PTFT…CTVK), 2258-2350 (PKFV…ANFT), 2391-2481 (PQFI…AQLT), 2522-2613 (PKFV…GQLS), 2654-2745 (PSFV…ANVG), 2787-2878 (PQWV…ATVT), 2919-3010 (PNFL…ASIR), 3051-3141 (PAIT…ATLK), 3182-3273 (PRFI…ATIE), 3314-3407 (PAIV…FEVS), and 3448-3539 (PVFI…TKLT). Residues Cys-827 and Cys-877 are joined by a disulfide bond. Cys-1201 and Cys-1265 are oxidised to a cystine. The cysteines at positions 1618 and 1671 are disulfide-linked. 2 disulfides stabilise this stretch: Cys-2016/Cys-2069 and Cys-2148/Cys-2201. Over residues 3567-3583 (EAPRPAREDAPDADHGP) the composition is skewed to basic and acidic residues. The interval 3567–3590 (EAPRPAREDAPDADHGPPKFTSAL) is disordered. Ig-like domains are found at residues 3584–3677 (PKFT…LKVV), 3720–3811 (PSFS…GKIA), 3821–3913 (PQVV…TKIT), 3962–4052 (PEFR…AKLA), and 4098–4185 (PQFT…ATLD). 2 disulfides stabilise this stretch: Cys-3606–Cys-3659 and Cys-3742–Cys-3795. Residues 4193-4963 (RQTKLRPANF…TSQAKLTLSR (771 aa)) are required for F-actin binding. Over residues 4319 to 4329 (DQQEVGWERPD) the composition is skewed to basic and acidic residues. The disordered stretch occupies residues 4319–4357 (DQQEVGWERPDWAGQDGTSKLPGADEGRFKKLPTPAPEL). 4 Ig-like domains span residues 4546 to 4634 (PTIS…ANLT), 4645 to 4733 (PDFS…ARLN), 4752 to 4842 (PRFT…LVLT), and 4872 to 4960 (PHFI…AKLT).

As to quaternary structure, interacts (via Ig-like domains) with F-actin. Expressed in the pharyngeal, body wall, and anal depressor muscles. Expression in these muscles is higher in hermaphrodites than in males. Expressed in the vulva and the myoepithelial sheath of the proximal ovary. Expressed in the proximal gonad of males. Not expressed in the dense bodies of the obliquely striated body wall muscle.

Its subcellular location is the cytoplasm. The protein resides in the myofibril. The protein localises to the sarcomere. It is found in the cytoskeleton. Its function is as follows. Positively regulates actin filament organization and provides mechanical stability to the myofibrils during body wall muscle contraction. Required for the organization of sarcomeric actin filaments and myosin protein myo-3 in striated body wall muscle cells. Not required for assembly of dense bodies, which are a type of integrin-based adhesion structure that link the plasma membrane to thin filaments of myofibrils, in body wall muscle. Not required for the atn-1 protein to localize to the dense bodies. This is Kettin homolog from Caenorhabditis elegans.